The primary structure comprises 638 residues: Paramyosin (638 aa).

The stretch at 1–638 forms a coiled coil; that stretch reads FSPSTTRLES…EGDISVMQAD (638 aa).

It belongs to the paramyosin family. Homodimer.

The protein resides in the cytoplasm. It localises to the myofibril. Functionally, paramyosin is a major structural component of many thick filaments isolated from invertebrate muscles. This Opisthorchis felineus protein is Paramyosin.